The primary structure comprises 118 residues: Small ribosomal subunit protein uS13 (118 aa).

A disordered region spans residues 93-118 (RNLPVRGQNTKNNARTRKGPTRPLKR). The span at 106-118 (ARTRKGPTRPLKR) shows a compositional bias: basic residues.

Belongs to the universal ribosomal protein uS13 family. Part of the 30S ribosomal subunit. Forms a loose heterodimer with protein S19. Forms two bridges to the 50S subunit in the 70S ribosome.

Its function is as follows. Located at the top of the head of the 30S subunit, it contacts several helices of the 16S rRNA. In the 70S ribosome it contacts the 23S rRNA (bridge B1a) and protein L5 of the 50S subunit (bridge B1b), connecting the 2 subunits; these bridges are implicated in subunit movement. Contacts the tRNAs in the A and P-sites. This is Small ribosomal subunit protein uS13 from Psychrobacter cryohalolentis (strain ATCC BAA-1226 / DSM 17306 / VKM B-2378 / K5).